The following is a 178-amino-acid chain: Large ribosomal subunit protein uL6 (178 aa).

It belongs to the universal ribosomal protein uL6 family. Part of the 50S ribosomal subunit.

In terms of biological role, this protein binds to the 23S rRNA, and is important in its secondary structure. It is located near the subunit interface in the base of the L7/L12 stalk, and near the tRNA binding site of the peptidyltransferase center. The protein is Large ribosomal subunit protein uL6 of Campylobacter hominis (strain ATCC BAA-381 / DSM 21671 / CCUG 45161 / LMG 19568 / NCTC 13146 / CH001A).